A 148-amino-acid chain; its full sequence is 3-dehydroquinate dehydratase (148 aa).

Residue Tyr-26 is the Proton acceptor of the active site. The substrate site is built by Asn-75, His-81, and Asp-88. His-101 (proton donor) is an active-site residue. Residues 102-103 and Arg-112 each bind substrate; that span reads LS.

The protein belongs to the type-II 3-dehydroquinase family. Homododecamer.

The enzyme catalyses 3-dehydroquinate = 3-dehydroshikimate + H2O. The protein operates within metabolic intermediate biosynthesis; chorismate biosynthesis; chorismate from D-erythrose 4-phosphate and phosphoenolpyruvate: step 3/7. Its function is as follows. Catalyzes a trans-dehydration via an enolate intermediate. The chain is 3-dehydroquinate dehydratase from Shewanella frigidimarina (strain NCIMB 400).